A 129-amino-acid polypeptide reads, in one-letter code: uncharacterized protein (129 aa).

Transmembrane regions (helical) follow at residues 22–42, 55–75, and 88–108; these read LASSFSNASTLLSFVFFFFFF, VGSFSASASAETLLDFFFFFF, and LPFTAASKSSGITFLVFFFFF.

The protein resides in the membrane. This is an uncharacterized protein from Saccharomyces cerevisiae (strain ATCC 204508 / S288c) (Baker's yeast).